Reading from the N-terminus, the 332-residue chain is N-arachidonyl glycine receptor (332 aa).

Residues 1-26 (MTTPHSQAQPGLPIDPHPDEYKVAAL) lie on the Extracellular side of the membrane. The helical transmembrane segment at 27-47 (VFYSCIFIIGLFVNVTALWVF) threads the bilayer. Over 48–56 (SCTTKKRTT) the chain is Cytoplasmic. Residues 57 to 77 (VTVYMMNVALLDLVFIMSLPF) traverse the membrane as a helical segment. Residues 78–95 (RMLYYAKGEWPFGEYFCR) are Extracellular-facing. A disulfide bond links C94 and C173. The chain crosses the membrane as a helical span at residues 96–116 (ILGALTVFYPSIALWLLAFIS). The Cytoplasmic portion of the chain corresponds to 117–138 (ADRYMAIVQPKYAKELKNTCKA). The helical transmembrane segment at 139 to 159 (VMACVGVWIMTLTTTIPLLLL) threads the bilayer. Residues 160 to 192 (YEDPDTASSTPPTCLKISDIIYLKAINALNFTR) are Extracellular-facing. N-linked (GlcNAc...) asparagine glycosylation occurs at N189. A helical transmembrane segment spans residues 193–213 (LIFFFLIPLFIMIGCYLVIIH). Over 214–233 (SLLHGKTSKLKPKVKEKSIR) the chain is Cytoplasmic. The helical transmembrane segment at 234–254 (IIITLMVQVLVCFMPFHICFA) threads the bilayer. Residues 255 to 269 (FLMLGGDENSYNPWG) lie on the Extracellular side of the membrane. The helical transmembrane segment at 270–290 (AFTTFLMNLSTCLDVILYYIV) threads the bilayer. Topologically, residues 291–332 (SKQFQARVISVMLYRNYLRSVRRKSFRSGSLRSLSNINSEML) are cytoplasmic. The residue at position 323 (S323) is a Phosphoserine.

This sequence belongs to the G-protein coupled receptor 1 family.

It is found in the cell membrane. The protein localises to the cytoplasmic vesicle membrane. Its function is as follows. G protein-coupled receptor (GPCR) that plays a role in diverse physiological processes particularly within the immune and nervous systems. Becomes active when triggered by various endogenous ligands including endocannabinoid N-arachidonyl glycine (NAGly), delta-9-tetrahydrocannabinol or resolvin D2/RvD2 derived from the omega-3 fatty acid docosahexaenoic acid (DHA). Upon RvD2 binding, facilitates the resolution of inflammation, aiding in tissue repair and homeostasis. Mechanistically, RvD2 ligation initiates Galphas protein coupling, activation of cAMP-PKA signaling pathway and phosphorylation of STAT3, leading to RvD2-stimulated macrophage phagocytosis. Mediates NAGly-induced process of reorganization of actin filaments and induction of acrosomal exocytosis. Activation by N-arachidonoyl glycine (NAGly) can also induce apoptosis in macrophages. Plays a role in homeostasis of CD8+ subsets of intraepithelial lymphocytes (IELs) (CD8alphaalpha and CD8alphabeta IELs) in small intestine by supporting preferential migration of CD8alphaalpha T-cells to intraepithelial compartment over lamina propria compartment, and by mediating their reconstitution into small intestine after bone marrow transplant. Participates also in hypotensive responses, mediating reduction in intraocular and blood pressure. This chain is N-arachidonyl glycine receptor (GPR18), found in Bos taurus (Bovine).